The chain runs to 366 residues: tRNA-specific 2-thiouridylase MnmA (366 aa).

ATP-binding positions include 12-19 and Met38; that span reads GMSGGVDS. Positions 98-100 are interaction with target base in tRNA; it reads NPD. Catalysis depends on Cys103, which acts as the Nucleophile. An intrachain disulfide couples Cys103 to Cys200. ATP is bound at residue Gly128. The segment at 150–152 is interaction with tRNA; the sequence is KDQ. Catalysis depends on Cys200, which acts as the Cysteine persulfide intermediate. Residues 312–313 form an interaction with tRNA region; that stretch reads RY.

Belongs to the MnmA/TRMU family.

It is found in the cytoplasm. It catalyses the reaction S-sulfanyl-L-cysteinyl-[protein] + uridine(34) in tRNA + AH2 + ATP = 2-thiouridine(34) in tRNA + L-cysteinyl-[protein] + A + AMP + diphosphate + H(+). Its function is as follows. Catalyzes the 2-thiolation of uridine at the wobble position (U34) of tRNA, leading to the formation of s(2)U34. The chain is tRNA-specific 2-thiouridylase MnmA from Pseudoalteromonas translucida (strain TAC 125).